Reading from the N-terminus, the 298-residue chain is UDP-N-acetylenolpyruvoylglucosamine reductase (298 aa).

An FAD-binding PCMH-type domain is found at 26–191 (KTGGPADWLA…LDATFALEPG (166 aa)). Arginine 170 is a catalytic residue. The active-site Proton donor is serine 220. The active site involves glutamate 290.

It belongs to the MurB family. FAD is required as a cofactor.

The protein localises to the cytoplasm. It catalyses the reaction UDP-N-acetyl-alpha-D-muramate + NADP(+) = UDP-N-acetyl-3-O-(1-carboxyvinyl)-alpha-D-glucosamine + NADPH + H(+). Its pathway is cell wall biogenesis; peptidoglycan biosynthesis. Its function is as follows. Cell wall formation. The chain is UDP-N-acetylenolpyruvoylglucosamine reductase from Limosilactobacillus reuteri subsp. reuteri (strain JCM 1112) (Lactobacillus reuteri).